A 148-amino-acid polypeptide reads, in one-letter code: Large ribosomal subunit protein bL9 (148 aa).

The protein belongs to the bacterial ribosomal protein bL9 family.

Functionally, binds to the 23S rRNA. This is Large ribosomal subunit protein bL9 from Desulfitobacterium hafniense (strain DSM 10664 / DCB-2).